The sequence spans 308 residues: MTDNKSQKVITLMGPTASGKTALAIELVKQYNCEIISVDSALIYKEMDIGTAKPDAAEQAAAPHRLIDIIDPAKSYSAADFRRDALAQIEDILSRGKTPLLVGGTMMYFKALLEGLSPLPAADEVVRAQIACEAQEFGWQALHDQLREIDPVSAERIHPNDPQRLARALEVYRISGQSLTELTKTKSEAFPYEAVQFAIAPSDRKVLHRAIETRFKTMLTLGFTAEVERLKARGDLDLDLPSMRCVGYRQCWQYLDGEIDYETMVEKAIVATRQLAKRQLTWLRGWPDLIWLESGAEDNLATVMRHSR.

Position 14–21 (Gly-14–Thr-21) interacts with ATP. A substrate-binding site is contributed by Thr-16–Thr-21. Interaction with substrate tRNA stretches follow at residues Asp-39–Leu-42, Gln-163–Arg-167, and Arg-244–Arg-249.

The protein belongs to the IPP transferase family. As to quaternary structure, monomer. Mg(2+) is required as a cofactor.

It carries out the reaction adenosine(37) in tRNA + dimethylallyl diphosphate = N(6)-dimethylallyladenosine(37) in tRNA + diphosphate. In terms of biological role, catalyzes the transfer of a dimethylallyl group onto the adenine at position 37 in tRNAs that read codons beginning with uridine, leading to the formation of N6-(dimethylallyl)adenosine (i(6)A). In Shewanella halifaxensis (strain HAW-EB4), this protein is tRNA dimethylallyltransferase.